The sequence spans 234 residues: Adenylate dimethylallyltransferase (234 aa).

The protein belongs to the isopentenyl transferase family.

The enzyme catalyses dimethylallyl diphosphate + AMP = N(6)-(dimethylallyl)adenosine 5'-phosphate + diphosphate. Transfers dimethylallyl groups to AMP as part of the biosynthesis of cytokinin phytohormones. The polypeptide is Adenylate dimethylallyltransferase (ptz) (Pseudomonas savastanoi (Pseudomonas syringae pv. savastanoi)).